We begin with the raw amino-acid sequence, 394 residues long: Elongation factor Tu (394 aa).

The tr-type G domain maps to 10–204 (KPHVNVGTIG…ALDSYIPEPE (195 aa)). Residues 19-26 (GHVDHGKT) are G1. Position 19 to 26 (19 to 26 (GHVDHGKT)) interacts with GTP. Thr26 contributes to the Mg(2+) binding site. Residues 60-64 (GITIN) form a G2 region. A G3 region spans residues 81–84 (DCPG). Residues 81-85 (DCPGH) and 136-139 (NKCD) contribute to the GTP site. Residues 136–139 (NKCD) form a G4 region. Positions 174-176 (SAL) are G5.

It belongs to the TRAFAC class translation factor GTPase superfamily. Classic translation factor GTPase family. EF-Tu/EF-1A subfamily. In terms of assembly, monomer.

It localises to the cytoplasm. It catalyses the reaction GTP + H2O = GDP + phosphate + H(+). In terms of biological role, GTP hydrolase that promotes the GTP-dependent binding of aminoacyl-tRNA to the A-site of ribosomes during protein biosynthesis. The chain is Elongation factor Tu from Shewanella amazonensis (strain ATCC BAA-1098 / SB2B).